We begin with the raw amino-acid sequence, 2281 residues long: MKGHQFKSWIFELREILREIKNSHYFLDSWTQFNSVGSFIHIFFHQERFIKLFDPRIWSILLSRNSQGSISNRYFTIKGVILFVVVVLIYRINNRNMVESKNLYLIGLLPIPMNSIGPKNDTLEESVGSSNINRLIVSLLSLPKGKKISESCFLNPKESTWVLPITKKCSIPESNWGSRWWRKWIGKGGDSSCKISNETAAGIEILFKEKDLKYLEFLFVYYMDDPTRKDRDWELFDRLSLRKRRNTINLNSGPLFEILVKHWISYLMSAFREKIPIEAEGFFKQQGAGSTIQSNDIEHVSHLFSRNKWAISLQNCAQFHMWQFRQDLFISWGKESDFLRNVSRENLIWLDNVWLVNKDRFFSKVRNVSSNIQYDSTRSSFVQVTDSSQLKGSSDQSRDHLDSISNEDSEYHTLINQREIQQLKERSILLDPSFLQTERTEIESDRFPKCLSGYSSMSRLFTEREKQMINHLLPEEIEEFLGNPTRSVRSFFSDRWSELHLGLNPTERSTRDQKLLKKQQDLSFVPSRRSENKEMVNIFKIITYLQNTVSIHPISSDPGCDMVPKDEPDMDSSNKISFLNKNPFFDLFHLFHARNRGGYTLHHDFELEERFQEMADLFTLSITEPDLVYHKGFAFSIDSYGLDQKQFLNEVFNSRDESKKKSLLVLPLIFYEENESFSRRIRKKWVRISCGNDLEDPQPKIVIFASNNIMGAVNQYRLIRNLIQIQSSTYGYIRNVLNRFFLMNRSDRNFEYGIQIQRDQIGKDTLNHRTIMKYTINQHLSNLKKSQKKWLDPLILISRTERSMNRDPDAYRYKGSNGSKNFQEHLEHFVSEQKSHFQVMFDRLRINQYSIDWSEVIDKKDLSKPLRFFLSKSLLFLSKLLFFLSNSLPFFCVSFGNIPIHRSEIYIYEFKGPDDQLCSQLLESIGLQIVHLKKLKPFLLDDHDTSQKSKFLINGGTISPFLFNKIPKWMVDSFHTRNNRRKSFDNTDSYFSMIFHDQDNWLNPVKPFHRSSLISSFYKANRLRFLNNPHHFCFYCNTRFPLSVEKARINNYDFTYGQFLNILLRMNKIFSLCVGKKKHAFGGRDTISPIESQVSNIFIPNDFPQSGDETYNLYKSFHFLSRSDPFVRRAIYSIADISGTPLTEGQIVNFERTYCQPLSDMNLSDSEGKNLHQYRNFNSNMGLIHTPYSEKYLPSEKRKKRILCLKKCVEKGQMYRTFQRDSAFSTLSKWNLFQTYMPWFLTSTGYKYLNLIFLDTFSDLLPILSSSQKLVSIFHDIMHGSGISWRILQKNLCLPQWNLISEISSKCLHNLLLSEERIHRNKNNESPLISTHLRSPNVREFLYSTLFLLLVAGYLVRTHLLFVSRVSSELQTEFEKVKSLIIPSSMIELRKLLDRYPTSEPNSFWLKNIFLAALEQLGDSLEEIRGSASGGNMLGPAYGVKSIRSKKKYLNINLIDIVDLIPNPINRITFSRNTRHLSHTSKEIYSLIRKRKNVNGDWIDDKIESWVANSDSIGDEEREFLVQFSTLTTEKGIDQILLSLTHSDHLSKNDSGYQMIEQPGAIYLRYLVDIHKKYLMNYEFNTFCLAERRIFLAHYQTITYSQTSCGANSFHFPSHGKPFSLRLALSPSRAILVIGSIGSGRSYLVKYLATNSYVPFITVFLNKFLDNKPKGFLIDDINIDDSDDIDASDDIDRDLDTELELLTMMNALTMDMMPEIDRFYITLQFELAKAMSPCIIWIPNIHDLDVNESNYLSLGLLVNHLSMDCERCSTRNILVIASTHIPQKVDPALIAPNKLNTCIKIRRLLIPQQRKHLFTLSYTRGFHLEKKMFHTNGFGSITMGSNARDLVALTNEALSISITQKKSIIDTNTIRSALYRQTWYLRSQVRSVQDHGILFYQIGRAVAQNVFLSNCPIDPISIYMKKKSCNEGDFYLYKWYFELGTSMKKLTILLYLLSCSAGSVAQDLWSLPGPDEKNGITSYGLVENDSDLVHGLLEVEGALVGSSRTEKDCSQFDNDRVTLLLRPEPRNPLDMMQSGSCSILDQRFLYEKYESEFEEGEGEGALDPQQIEEDLFNYIVWAPRIWRPWAFLFDCIERPNELGFPYWSRPFWGKRIIYDEEDELQENDSEFLQNGTVQYQTRDRSSKEQGPFRISQFIWDPADPLFFLFKDQPPGSVFSHRELFADEEMSKGLLTSQTDPPTSIYKRWFIKNTQEKHFELLINRQRWLRTNSSLSNGSFRSNTLSESYQYLSNLFLSNGTLLDQMTKTLLRKRWLFPDEMKIGFM.

1635-1642 (GSIGSGRS) is a binding site for ATP.

It belongs to the Ycf2 family.

Its subcellular location is the plastid. It is found in the chloroplast stroma. Functionally, probable ATPase of unknown function. Its presence in a non-photosynthetic plant (Epifagus virginiana) and experiments in tobacco indicate that it has an essential function which is probably not related to photosynthesis. This Coffea arabica (Arabian coffee) protein is Protein Ycf2.